Consider the following 137-residue polypeptide: Fluoride-specific ion channel FluC 1 (137 aa).

Helical transmembrane passes span 4–24, 37–57, 67–87, and 98–118; these read LIYI…YYLG, LATL…TTYI, VITG…TFSV, and WGIA…MSGL. Residues Gly77 and Thr80 each coordinate Na(+).

This sequence belongs to the fluoride channel Fluc/FEX (TC 1.A.43) family.

The protein resides in the cell membrane. It catalyses the reaction fluoride(in) = fluoride(out). Its activity is regulated as follows. Na(+) is not transported, but it plays an essential structural role and its presence is essential for fluoride channel function. Fluoride-specific ion channel. Important for reducing fluoride concentration in the cell, thus reducing its toxicity. The chain is Fluoride-specific ion channel FluC 1 from Bacillus cereus (strain ZK / E33L).